A 783-amino-acid chain; its full sequence is B-cell scaffold protein with ankyrin repeats (783 aa).

The segment at 1–154 (MLPVASGTRG…GYISVIRQIL (154 aa)) is interaction with ITPR2. One can recognise a TIR domain in the interval 25-153 (NAKDILLLYE…DGYISVIRQI (129 aa)). A DBB domain is found at 199–326 (VLPGEIPCEK…EIPYYEFKHL (128 aa)). ANK repeat units lie at residues 341–370 (ELPT…ATRA) and 377–407 (DGSD…NTGR). 4 disordered regions span residues 422–521 (FSTY…AASQ), 538–586 (MERS…EDNE), 604–624 (SFII…PPKE), and 641–670 (RQSD…STRD). Basic and acidic residues predominate over residues 444–479 (RNTDRSEEPERSVEMKEEEAGAEARRSLSEGERESS). Residues 505–515 (HCRPPLLPPRP) are compositionally biased toward pro residues. The span at 549–565 (ARPETREESSREEKKEE) shows a compositional bias: basic and acidic residues. A compositionally biased stretch (acidic residues) spans 566–586 (AQEEEEEEENPYAFAETEDNE). Residues 610 to 620 (PPAPTPRPTHI) are compositionally biased toward pro residues. The segment covering 641–660 (RQSDGDKFYSLPKKPDKTRM) has biased composition (basic and acidic residues). Y649 bears the Phosphotyrosine mark.

As to quaternary structure, interacts with LYN, ITPR1 and ITPR2. Post-translationally, phosphorylated on tyrosines upon BCR activation. Specifically expressed in spleen. Highly expressed in immature B-cells and recirculating B-cells, and at low levels in pro-B and pre-B cells.

Involved in B-cell receptor (BCR)-induced Ca(2+) mobilization from intracellular stores. Promotes Lyn-mediated phosphorylation of IP3 receptors 1 and 2. This is B-cell scaffold protein with ankyrin repeats (Bank1) from Mus musculus (Mouse).